The following is a 456-amino-acid chain: Equilibrative nucleoside transporter 2 (456 aa).

At 1–12 the chain is on the cytoplasmic side; sequence MAHGNAPRDSYH. Residues 13–29 traverse the membrane as a helical segment; the sequence is LVGISFFILGLGTLLPW. Residues 30–68 are Extracellular-facing; that stretch reads NFFITAIPYFQGRLAGTNSSAETPSTNHTSPTDTFNFNN. Residues Asn47 and Asn56 are each glycosylated (N-linked (GlcNAc...) asparagine). A helical transmembrane segment spans residues 69-93; sequence WVTLLSQLPLLLFTLLNSFLYQCIP. Residues 94–97 lie on the Cytoplasmic side of the membrane; sequence ESVR. Residues 98–116 traverse the membrane as a helical segment; it reads ILGSLLAILLLFALTAALV. Residues 117 to 124 are Extracellular-facing; it reads KVDLSPGL. A helical transmembrane segment spans residues 125 to 143; the sequence is FFSITMASVWFINSFCAVL. Over 144–160 the chain is Cytoplasmic; the sequence is QGSLFGQLGTMPSTYST. The chain crosses the membrane as a helical span at residues 161–185; the sequence is LFLSGQGLAGIFAALAMLTSLASGV. Residues 186–192 are Extracellular-facing; it reads DPQTSAL. A helical transmembrane segment spans residues 193–213; the sequence is GYFITPCVGILLSIICYLSLP. The Cytoplasmic portion of the chain corresponds to 214-291; sequence HLKFARYYLT…VFVVFRKIWL (78 aa). The residue at position 251 (Ser251) is a Phosphoserine. Residues 292–311 traverse the membrane as a helical segment; it reads TALCLVLVFTVTLSVFPAIT. The Extracellular portion of the chain corresponds to 312–323; that stretch reads AMVTTSSNSPGK. Residues 324 to 342 form a helical membrane-spanning segment; that stretch reads WSQFFNPICCFLLFNVMDW. At 343-359 the chain is on the cytoplasmic side; the sequence is LGRSLTSYFLWPDEDSQ. The chain crosses the membrane as a helical span at residues 360-378; it reads LLPLLVCLRFLFVPLFMLC. The Extracellular portion of the chain corresponds to 379 to 393; it reads HVPQRARLPIIFWQD. The chain crosses the membrane as a helical span at residues 394-413; it reads AYFITFMLLFAISNGYFVSL. At 414 to 431 the chain is on the cytoplasmic side; it reads TMCLAPRQVLPHEREVAG. A helical membrane pass occupies residues 432 to 452; that stretch reads ALMTFFLALGLSCGASLSFLF. Residues 453–456 lie on the Extracellular side of the membrane; the sequence is KALL.

It belongs to the SLC29A/ENT transporter (TC 2.A.57) family. In terms of tissue distribution, expressed in squeletal muscles. Expressed in testis at the blood-brain-barrier.

It localises to the apical cell membrane. It is found in the basolateral cell membrane. It catalyses the reaction uridine(out) = uridine(in). The enzyme catalyses inosine(in) = inosine(out). The catalysed reaction is adenosine(in) = adenosine(out). It carries out the reaction thymidine(in) = thymidine(out). It catalyses the reaction hypoxanthine(out) = hypoxanthine(in). The enzyme catalyses adenine(out) = adenine(in). The catalysed reaction is cytidine(in) = cytidine(out). It carries out the reaction thymine(out) = thymine(in). It catalyses the reaction uracil(in) = uracil(out). The enzyme catalyses guanine(out) = guanine(in). The catalysed reaction is guanosine(in) = guanosine(out). Functionally, bidirectional uniporter involved in the facilitative transport of nucleosides and nucleobases, and contributes to maintaining their cellular homeostasis. Functions as a Na(+)-independent, passive transporter. Involved in the transport of nucleosides such as inosine, adenosine, uridine, thymidine, cytidine and guanosine. Also able to transport purine nucleobases (hypoxanthine, adenine, guanine) and pyrimidine nucleobases (thymine, uracil). Involved in nucleoside transport at basolateral membrane of kidney cells, allowing liver absorption of nucleoside metabolites. Mediates apical nucleoside uptake into Sertoli cells, thereby regulating the transport of nucleosides in testis across the blood-testis-barrier. Mediates both the influx and efflux of hypoxanthine in skeletal muscle microvascular endothelial cells to control the amount of intracellular hypoxanthine available for xanthine oxidase-mediated ROS production. The sequence is that of Equilibrative nucleoside transporter 2 from Rattus norvegicus (Rat).